Here is a 607-residue protein sequence, read N- to C-terminus: tRNA uridine 5-carboxymethylaminomethyl modification enzyme MnmG (607 aa).

FAD contacts are provided by residues 11–16 (GGGHAG), valine 123, and serine 178. Residue 270-284 (GPRYCPSVEDKIVRF) participates in NAD(+) binding. Glutamine 367 provides a ligand contact to FAD.

Belongs to the MnmG family. As to quaternary structure, homodimer. Heterotetramer of two MnmE and two MnmG subunits. FAD serves as cofactor.

Its subcellular location is the cytoplasm. NAD-binding protein involved in the addition of a carboxymethylaminomethyl (cmnm) group at the wobble position (U34) of certain tRNAs, forming tRNA-cmnm(5)s(2)U34. This Metamycoplasma arthritidis (strain 158L3-1) (Mycoplasma arthritidis) protein is tRNA uridine 5-carboxymethylaminomethyl modification enzyme MnmG.